The primary structure comprises 328 residues: MKQCWVDLSCWNKDLATVALEAGVDAIVVDDAAKVNVLAKVTTIAPNGDLIPGKDVSMVTIVDKASEEACLEKAKLGPVIVSTGDWTVIPLENLVAQSDRIFAAVGSVEEARLALTILEQGVAGVVLMTTDPEVIRTVAAMVRGAGAKVPLVPFTLTVVRQLGMGDRVCIDTCSILADGEGMLVGNTSSAFFLVHAETIENLYVAPRPFRVNAGAVHAYVLTPGNRTAYLADLRAGDLVTVTAADGGTEEVIIGRLKIEKRPLLLVEGEAGGVKAGLVLQNAETIRLVGLDGKARSVVDLKPGDQVLGMVAEGGRHFGYAVKEQICEQ.

This sequence belongs to the archaeal-type DHQ synthase family.

The catalysed reaction is 2-amino-2,3,7-trideoxy-D-lyxo-hept-6-ulosonate + NAD(+) + H2O = 3-dehydroquinate + NH4(+) + NADH + H(+). Its function is as follows. Catalyzes the oxidative deamination and cyclization of 2-amino-3,7-dideoxy-D-threo-hept-6-ulosonic acid (ADH) to yield 3-dehydroquinate (DHQ), which is fed into the canonical shikimic pathway of aromatic amino acid biosynthesis. This is 3-dehydroquinate synthase from Methanosphaerula palustris (strain ATCC BAA-1556 / DSM 19958 / E1-9c).